A 175-amino-acid chain; its full sequence is Cytochrome c-550-like protein (175 aa).

The N-terminal stretch at 1-34 (MYQPHFWQRSIGWLCGGLLILLLGWTIAPATALA) is a signal peptide. The heme c site is built by Cys81, Cys84, His85, and Cys135.

The protein belongs to the cytochrome c family. PsbV subfamily. Heme c is required as a cofactor.

The protein resides in the cellular thylakoid membrane. Probable low-potential cytochrome c, can partially replace cytochrome c-550 (PsbV) function. The protein is Cytochrome c-550-like protein of Thermosynechococcus vestitus (strain NIES-2133 / IAM M-273 / BP-1).